We begin with the raw amino-acid sequence, 331 residues long: Nucleotide sugar transporter SLC35B4 (331 aa).

11 helical membrane passes run alanine 4–leucine 24, glycine 30–phenylalanine 50, proline 59–valine 79, leucine 92–leucine 112, serine 117–methionine 137, glycine 153–methionine 173, alanine 201–phenylalanine 221, isoleucine 229–threonine 249, tyrosine 251–leucine 267, threonine 268–phenylalanine 288, and proline 291–threonine 311. The short motif at lysine 326–asparagine 331 is the Mediates endoplasmic reticulum retention element.

The protein belongs to the nucleotide-sugar transporter family. SLC35B subfamily.

The protein resides in the endoplasmic reticulum membrane. The enzyme catalyses UDP-N-acetyl-alpha-D-glucosamine(in) + UDP-alpha-D-glucuronate(out) = UDP-N-acetyl-alpha-D-glucosamine(out) + UDP-alpha-D-glucuronate(in). The catalysed reaction is UDP-alpha-D-xylose(in) + UDP-alpha-D-glucuronate(out) = UDP-alpha-D-xylose(out) + UDP-alpha-D-glucuronate(in). Its function is as follows. Antiporter that transports nucleotide sugars across the endoplasmic reticulum (ER) membrane in exchange for another nucleotide sugar. May couple UDP-alpha-D-glucuronate (UDP-GlcA) or UDP-alpha-D-xylose (UDP-Xyl) efflux to UDP-alpha-D-glucuronate (UDP-GlcA) influx into the ER lumen, which in turn stimulates glucuronidation and excretion of endobiotics and xenobiotics. The chain is Nucleotide sugar transporter SLC35B4 (SLC35B4) from Macaca fascicularis (Crab-eating macaque).